The primary structure comprises 88 residues: MDIKLINIGFGNIVSGNRVISIVSPESAPIKRIISEARDRAQLIDATYGRRTRAVIVTDSGHVVLSAIQPETVAHRFMSNKDTKDSDK.

It belongs to the RemA family.

The protein is Putative regulatory protein AM1_5498 of Acaryochloris marina (strain MBIC 11017).